The chain runs to 194 residues: Protein A43 (194 aa).

A signal peptide spans 1–22 (MMMMKWIISILTMSIMPVLAYS). Over 23 to 165 (SSIFRFHSED…YKDINDKYND (143 aa)) the chain is Extracellular. N-linked (GlcNAc...) asparagine; by host glycans are attached at residues N65 and N114. The chain crosses the membrane as a helical span at residues 166–186 (IYDFTAICMLIASTLIVTIYV). Residues 187-194 (FKKIKMNS) are Cytoplasmic-facing.

Belongs to the orthopoxvirus OPG172 protein family.

The protein localises to the host membrane. Its subcellular location is the host cell surface. The protein is Protein A43 (OPG172) of Homo sapiens (Human).